A 211-amino-acid polypeptide reads, in one-letter code: uncharacterized protein (211 aa).

The segment at 187-211 is disordered; the sequence is LKVSEQENSEAPVSEPKEDEKTKKD. Residues 201-211 show a composition bias toward basic and acidic residues; sequence EPKEDEKTKKD.

This is an uncharacterized protein from Spiroplasma citri.